A 240-amino-acid chain; its full sequence is 1-(5-phosphoribosyl)-5-[(5-phosphoribosylamino)methylideneamino] imidazole-4-carboxamide isomerase (240 aa).

Residue D8 is the Proton acceptor of the active site. Catalysis depends on D129, which acts as the Proton donor.

It belongs to the HisA/HisF family.

It is found in the cytoplasm. It catalyses the reaction 1-(5-phospho-beta-D-ribosyl)-5-[(5-phospho-beta-D-ribosylamino)methylideneamino]imidazole-4-carboxamide = 5-[(5-phospho-1-deoxy-D-ribulos-1-ylimino)methylamino]-1-(5-phospho-beta-D-ribosyl)imidazole-4-carboxamide. It functions in the pathway amino-acid biosynthesis; L-histidine biosynthesis; L-histidine from 5-phospho-alpha-D-ribose 1-diphosphate: step 4/9. This Dinoroseobacter shibae (strain DSM 16493 / NCIMB 14021 / DFL 12) protein is 1-(5-phosphoribosyl)-5-[(5-phosphoribosylamino)methylideneamino] imidazole-4-carboxamide isomerase.